Consider the following 377-residue polypeptide: Nitric oxide reductase FlRd-NAD(+) reductase (377 aa).

The protein belongs to the FAD-dependent oxidoreductase family. It depends on FAD as a cofactor.

The protein localises to the cytoplasm. It carries out the reaction 2 reduced [nitric oxide reductase rubredoxin domain] + NAD(+) + H(+) = 2 oxidized [nitric oxide reductase rubredoxin domain] + NADH. It functions in the pathway nitrogen metabolism; nitric oxide reduction. Functionally, one of at least two accessory proteins for anaerobic nitric oxide (NO) reductase. Reduces the rubredoxin moiety of NO reductase. The sequence is that of Nitric oxide reductase FlRd-NAD(+) reductase from Salmonella enteritidis PT4 (strain P125109).